Reading from the N-terminus, the 337-residue chain is MLEKFERYPLTFGLTPIEKLDRLGKHLGGKVEIYAKREDCNSGLAFGGNKLRKLEYVIPDAIASDADTLVTVGGVQSNHTRMVAAVAAKIGMKCLLVHESWVPHEDVVYDRVGNILLSRILGAEVRLVDDGFDIGIRRSWEKALYEVKARGGRPYAIPAGASVHPNGGLGYVGFAEEVRAQEEQLGFAFDYMVVCTVTGSTHAGMLVGFAKDGRQRNVIGIDASATPAKTKAQVLSIARHTATLVELGSELAEDDVVLLEDYAHPRYGIPSEETKEAIRLCARLEGMITDPVYEGKSMQGMIDLVQKGFFPAGSRILYAHLGGAPAINGYGYTFRNG.

Lys-50 is modified (N6-(pyridoxal phosphate)lysine).

It belongs to the ACC deaminase/D-cysteine desulfhydrase family. In terms of assembly, homotrimer. Pyridoxal 5'-phosphate is required as a cofactor.

It catalyses the reaction 1-aminocyclopropane-1-carboxylate + H2O = 2-oxobutanoate + NH4(+). Functionally, catalyzes a cyclopropane ring-opening reaction, the irreversible conversion of 1-aminocyclopropane-1-carboxylate (ACC) to ammonia and alpha-ketobutyrate. Allows growth on ACC as a nitrogen source. The polypeptide is 1-aminocyclopropane-1-carboxylate deaminase (Mesorhizobium japonicum (strain LMG 29417 / CECT 9101 / MAFF 303099) (Mesorhizobium loti (strain MAFF 303099))).